A 134-amino-acid chain; its full sequence is Small ribosomal subunit protein uS17c (134 aa).

Residues 1–37 (HHFFTGNGIGLNRFSNPISSPQTQTQTRSLPFPAIKA) constitute a chloroplast transit peptide. Residues 106 to 134 (FLAVPAPSRKSKKAGSSGELGIPLQSQQE) form a disordered region.

Belongs to the universal ribosomal protein uS17 family. As to quaternary structure, part of the 30S ribosomal subunit.

The protein localises to the plastid. Its subcellular location is the chloroplast. Functionally, one of the primary rRNA binding proteins, it binds specifically to the 5'-end of 16S ribosomal RNA. The protein is Small ribosomal subunit protein uS17c (RPS17) of Pisum sativum (Garden pea).